The following is a 259-amino-acid chain: uncharacterized protein (259 aa).

A signal peptide spans 1–22; the sequence is MKHSKKLLLCISFLLITFFISG. Cys23 carries the N-palmitoyl cysteine lipid modification. Cys23 carries the S-diacylglycerol cysteine lipid modification.

It belongs to the staphylococcal tandem lipoprotein family.

The protein resides in the cell membrane. This is an uncharacterized protein from Staphylococcus epidermidis (strain ATCC 35984 / DSM 28319 / BCRC 17069 / CCUG 31568 / BM 3577 / RP62A).